A 350-amino-acid chain; its full sequence is Ribosomal RNA large subunit methyltransferase M (350 aa).

S-adenosyl-L-methionine contacts are provided by residues 217-220 (APGG), aspartate 236, aspartate 256, and aspartate 272. The Proton acceptor role is filled by lysine 301.

Belongs to the class I-like SAM-binding methyltransferase superfamily. RNA methyltransferase RlmE family. RlmM subfamily. In terms of assembly, monomer.

Its subcellular location is the cytoplasm. The catalysed reaction is cytidine(2498) in 23S rRNA + S-adenosyl-L-methionine = 2'-O-methylcytidine(2498) in 23S rRNA + S-adenosyl-L-homocysteine + H(+). Its function is as follows. Catalyzes the 2'-O-methylation at nucleotide C2498 in 23S rRNA. In Cellvibrio japonicus (strain Ueda107) (Pseudomonas fluorescens subsp. cellulosa), this protein is Ribosomal RNA large subunit methyltransferase M.